Here is a 400-residue protein sequence, read N- to C-terminus: Serpin E3 (400 aa).

Residues 1-19 (MQSLLLALLLLPVCSPGGA) form the signal peptide. The N-linked (GlcNAc...) asparagine glycan is linked to Asn46.

Belongs to the serpin family.

It localises to the secreted. In terms of biological role, probable serine protease inhibitor. The sequence is that of Serpin E3 (SERPINE3) from Bos taurus (Bovine).